A 172-amino-acid polypeptide reads, in one-letter code: 3-phenylpropionate/cinnamic acid dioxygenase subunit beta (172 aa).

This sequence belongs to the bacterial ring-hydroxylating dioxygenase beta subunit family. This dioxygenase system consists of four proteins: the two subunits of the hydroxylase component (HcaE and HcaF), a ferredoxin (HcaC) and a ferredoxin reductase (HcaD).

The enzyme catalyses 3-phenylpropanoate + NADH + O2 + H(+) = 3-(cis-5,6-dihydroxycyclohexa-1,3-dien-1-yl)propanoate + NAD(+). The catalysed reaction is (E)-cinnamate + NADH + O2 + H(+) = (2E)-3-(cis-5,6-dihydroxycyclohexa-1,3-dien-1-yl)prop-2-enoate + NAD(+). It functions in the pathway aromatic compound metabolism; 3-phenylpropanoate degradation. In terms of biological role, part of the multicomponent 3-phenylpropionate dioxygenase. Converts 3-phenylpropionic acid (PP) and cinnamic acid (CI) into 3-phenylpropionate-dihydrodiol (PP-dihydrodiol) and cinnamic acid-dihydrodiol (CI-dihydrodiol), respectively. In Escherichia coli O139:H28 (strain E24377A / ETEC), this protein is 3-phenylpropionate/cinnamic acid dioxygenase subunit beta.